Here is a 120-residue protein sequence, read N- to C-terminus: MADRQRDPDLADTLLLLEHPPVYTLGRGSSLDFIKFTPPASFTAGVTPSSRAEPTPPQPGPELHRTERGGEVTYHCPGQLVGYPILNLRRLSADLHWYLRQLEEYLIRVLDHYGLRGERI.

The region spanning 8–120 is the BPL/LPL catalytic domain; it reads PDLADTLLLL…DHYGLRGERI (113 aa). Positions 42–68 are disordered; the sequence is FTAGVTPSSRAEPTPPQPGPELHRTER. 68–75 contributes to the substrate binding site; it reads RGGEVTYH.

The protein belongs to the LipB family.

The protein resides in the cytoplasm. It catalyses the reaction octanoyl-[ACP] + L-lysyl-[protein] = N(6)-octanoyl-L-lysyl-[protein] + holo-[ACP] + H(+). Its pathway is protein modification; protein lipoylation via endogenous pathway; protein N(6)-(lipoyl)lysine from octanoyl-[acyl-carrier-protein]: step 1/2. Catalyzes the transfer of endogenously produced octanoic acid from octanoyl-acyl-carrier-protein onto the lipoyl domains of lipoate-dependent enzymes. Lipoyl-ACP can also act as a substrate although octanoyl-ACP is likely to be the physiological substrate. The sequence is that of Octanoyltransferase (lipB) from Prochlorothrix hollandica.